Consider the following 158-residue polypeptide: Methylglyoxal synthase (158 aa).

The MGS-like domain maps to M1–E158. Substrate is bound by residues H12, K16, T38 to T41, and S63 to G64. D69 (proton donor/acceptor) is an active-site residue. Residue H96 participates in substrate binding.

The protein belongs to the methylglyoxal synthase family.

It catalyses the reaction dihydroxyacetone phosphate = methylglyoxal + phosphate. Its function is as follows. Catalyzes the formation of methylglyoxal from dihydroxyacetone phosphate. The protein is Methylglyoxal synthase of Treponema socranskii.